Consider the following 461-residue polypeptide: Fumarate hydratase class II (461 aa).

Substrate-binding positions include 97–99, 127–130, 137–139, and Thr185; these read SGT, HPND, and SSN. The active-site Proton donor/acceptor is His186. Residue Ser316 is part of the active site. Substrate-binding positions include Ser317 and 322 to 324; that span reads KVN.

This sequence belongs to the class-II fumarase/aspartase family. Fumarase subfamily. In terms of assembly, homotetramer.

Its subcellular location is the cytoplasm. The catalysed reaction is (S)-malate = fumarate + H2O. It functions in the pathway carbohydrate metabolism; tricarboxylic acid cycle; (S)-malate from fumarate: step 1/1. Functionally, involved in the TCA cycle. Catalyzes the stereospecific interconversion of fumarate to L-malate. The chain is Fumarate hydratase class II from Staphylococcus aureus (strain COL).